Reading from the N-terminus, the 357-residue chain is Cinnamyl alcohol dehydrogenase 5 (357 aa).

Position 47 (Cys47) interacts with Zn(2+). Thr49 serves as a coordination point for NADP(+). Positions 69, 70, 100, 103, 106, 114, and 163 each coordinate Zn(2+). NADP(+) contacts are provided by residues Thr167, 188 to 193 (GLGGVG), 211 to 216 (SSSNKK), Thr251, Gly275, and 298 to 300 (SFI).

Belongs to the zinc-containing alcohol dehydrogenase family. In terms of assembly, homodimer. The cofactor is Zn(2+). As to expression, expressed at the lateral root initiation sites, in the vascular tissues of the primary lateral root and the root caps. Expressed in the hypocotyl, cotyledon and leaf veins, apical meristem region, at the base of the trichomes, hydathodes and cauline leaves. In stems, expressed in the cells associated with the vascular cambium, interfascicular cambium and the developing xylem. Expressed in the vascular strand of petals and sepals, anthers, stamen filaments, stigma in flowers, and abscission, style and stigmatic regions of siliques.

It carries out the reaction (E)-cinnamyl alcohol + NADP(+) = (E)-cinnamaldehyde + NADPH + H(+). The catalysed reaction is (E)-coniferol + NADP(+) = (E)-coniferaldehyde + NADPH + H(+). The enzyme catalyses (E)-sinapyl alcohol + NADP(+) = (E)-sinapaldehyde + NADPH + H(+). It catalyses the reaction (E)-4-coumaroyl alcohol + NADP(+) = (E)-4-coumaraldehyde + NADPH + H(+). It carries out the reaction (E)-caffeyl alcohol + NADP(+) = (E)-caffeyl aldehyde + NADPH + H(+). Its pathway is aromatic compound metabolism; phenylpropanoid biosynthesis. Its function is as follows. Involved in lignin biosynthesis in the floral stem. Catalyzes the final step specific for the production of lignin monomers. Catalyzes the NADPH-dependent reduction of coniferaldehyde, 5-hydroxyconiferaldehyde, sinapaldehyde, 4-coumaraldehyde and caffeyl aldehyde to their respective alcohols. The protein is Cinnamyl alcohol dehydrogenase 5 of Arabidopsis thaliana (Mouse-ear cress).